Reading from the N-terminus, the 428-residue chain is Elongation factor 1-alpha (428 aa).

The region spanning 5–215 (KPHVNIVFIG…ALDQIPEPPK (211 aa)) is the tr-type G domain. The tract at residues 14–21 (GHVDHGKS) is G1. 14–21 (GHVDHGKS) is a binding site for GTP. Mg(2+) is bound at residue S21. Residues 68 to 72 (GITID) are G2. Residues 89-92 (DAPG) are G3. GTP-binding positions include 89–93 (DAPGH) and 144–147 (NKMD). A G4 region spans residues 144-147 (NKMD). The segment at 181–183 (SAW) is G5.

It belongs to the TRAFAC class translation factor GTPase superfamily. Classic translation factor GTPase family. EF-Tu/EF-1A subfamily.

The protein resides in the cytoplasm. The enzyme catalyses GTP + H2O = GDP + phosphate + H(+). Its function is as follows. GTP hydrolase that promotes the GTP-dependent binding of aminoacyl-tRNA to the A-site of ribosomes during protein biosynthesis. The protein is Elongation factor 1-alpha of Thermococcus onnurineus (strain NA1).